We begin with the raw amino-acid sequence, 749 residues long: Protein lin-54 homolog (749 aa).

Residue lysine 139 forms a Glycyl lysine isopeptide (Lys-Gly) (interchain with G-Cter in SUMO2) linkage. 2 positions are modified to N6-acetyllysine: lysine 244 and lysine 249. Phosphoserine is present on residues serine 264, serine 282, serine 310, and serine 314. Lysine 357 participates in a covalent cross-link: Glycyl lysine isopeptide (Lys-Gly) (interchain with G-Cter in SUMO2). The 114-residue stretch at 521–634 (PRKPCNCTKS…KCIGCKNFEE (114 aa)) folds into the CRC domain. The segment at 523–536 (KPCNCTKSLCLKLY) is DNA-binding. 9 residues coordinate Zn(2+): cysteine 525, cysteine 527, cysteine 532, cysteine 537, cysteine 539, cysteine 546, cysteine 549, cysteine 551, and cysteine 554. The tract at residues 583–596 (IGKGKEGESDRRHS) is linker. Positions 599, 601, 606, 611, 613, 620, 624, 626, and 629 each coordinate Zn(2+). A DNA-binding region spans residues 599–612 (CNCKRSGCLKNYCE). Serine 635 bears the Phosphoserine mark. Residues lysine 639, lysine 659, and lysine 661 each participate in a glycyl lysine isopeptide (Lys-Gly) (interchain with G-Cter in SUMO2) cross-link.

Belongs to the lin-54 family. As to quaternary structure, component of the DREAM complex (also named LINC complex) at least composed of E2F4, E2F5, LIN9, LIN37, LIN52, LIN54, MYBL1, MYBL2, RBL1, RBL2, RBBP4, RBL2, TFDP1 and TFDP2. The complex exists in quiescent cells where it represses cell cycle-dependent genes. It dissociates in S phase when LIN9, LIN37, LIN52 and LIN54 form a subcomplex that binds to MYBL2.

It is found in the nucleus. Functionally, component of the DREAM complex, a multiprotein complex that can both act as a transcription activator or repressor depending on the context. In G0 phase, the complex binds to more than 800 promoters and is required for repression of E2F target genes. In S phase, the complex selectively binds to the promoters of G2/M genes whose products are required for mitosis and participates in their cell cycle dependent activation. In the complex, acts as a DNA-binding protein that binds the promoter of CDK1 in a sequence-specific manner. Specifically recognizes the consensus motif 5'-TTYRAA-3' in target DNA. The sequence is that of Protein lin-54 homolog (Lin54) from Rattus norvegicus (Rat).